Consider the following 246-residue polypeptide: Octanoyltransferase (246 aa).

The BPL/LPL catalytic domain occupies 50–231 (PDTDDEIWVV…RLIAHLDGAT (182 aa)). Residues 90–97 (RGGQITYH), 162–164 (ALG), and 175–177 (GLS) contribute to the substrate site. Cys193 serves as the catalytic Acyl-thioester intermediate.

Belongs to the LipB family.

Its subcellular location is the cytoplasm. The catalysed reaction is octanoyl-[ACP] + L-lysyl-[protein] = N(6)-octanoyl-L-lysyl-[protein] + holo-[ACP] + H(+). Its pathway is protein modification; protein lipoylation via endogenous pathway; protein N(6)-(lipoyl)lysine from octanoyl-[acyl-carrier-protein]: step 1/2. Its function is as follows. Catalyzes the transfer of endogenously produced octanoic acid from octanoyl-acyl-carrier-protein onto the lipoyl domains of lipoate-dependent enzymes. Lipoyl-ACP can also act as a substrate although octanoyl-ACP is likely to be the physiological substrate. The polypeptide is Octanoyltransferase (Burkholderia pseudomallei (strain 1106a)).